The following is a 570-amino-acid chain: Cation/calcium exchanger 1 (570 aa).

A run of 13 helical transmembrane segments spans residues 14 to 34 (LSLLINIFFIFLIFLHFASQT), 97 to 117 (SPVLGHLVLSAWLFVLFYLLG), 141 to 161 (MAGVTLLSLGNGAPDLFSSVV), 176 to 196 (ILGGAFFVSSFVVGTICVLIG), 212 to 232 (VFLLVALCCLGLIIFIGKVTI), 235 to 255 (ALCYLSIYLLYVGFLSVSHFF), 344 to 364 (CAVVSTAIAPVLLTELYCSHY), 371 to 391 (LILYIISGSIGLIVGILAYLT), 401 to 421 (FSLVWLLGGFTMSVTWTYMIA), 427 to 447 (LLISLGNIFGISPSVLGLTVL), 479 to 499 (YAGPLFNTVIGLGVPLVISSL), 513 to 533 (SLLETLGFLMVGLLWALVIMP), and 546 to 566 (GLLAIYLCFLSLRLARVFGVL).

It belongs to the Ca(2+):cation antiporter (CaCA) (TC 2.A.19) family. Cation/calcium exchanger (CCX) subfamily. In terms of tissue distribution, expressed in roots, leaves, stems and flowers.

Its subcellular location is the vacuole membrane. Its function is as follows. Vacuolar membrane-localized H(+)-dependent K(+) and Na(+) transporter. The polypeptide is Cation/calcium exchanger 1 (CCX1) (Arabidopsis thaliana (Mouse-ear cress)).